A 578-amino-acid polypeptide reads, in one-letter code: Sulfite reductase [NADPH] hemoprotein beta-component (578 aa).

Residues 1-11 (MSANQQSNSQE) are compositionally biased toward polar residues. A disordered region spans residues 1-20 (MSANQQSNSQEVLGEVLGPL). [4Fe-4S] cluster-binding residues include Cys441, Cys447, Cys487, and Cys491. Position 491 (Cys491) interacts with siroheme.

Belongs to the nitrite and sulfite reductase 4Fe-4S domain family. In terms of assembly, alpha(8)-beta(8). The alpha component is a flavoprotein, the beta component is a hemoprotein. Siroheme is required as a cofactor. The cofactor is [4Fe-4S] cluster.

The catalysed reaction is hydrogen sulfide + 3 NADP(+) + 3 H2O = sulfite + 3 NADPH + 4 H(+). It participates in sulfur metabolism; hydrogen sulfide biosynthesis; hydrogen sulfide from sulfite (NADPH route): step 1/1. Component of the sulfite reductase complex that catalyzes the 6-electron reduction of sulfite to sulfide. This is one of several activities required for the biosynthesis of L-cysteine from sulfate. This is Sulfite reductase [NADPH] hemoprotein beta-component from Vibrio campbellii (strain ATCC BAA-1116).